We begin with the raw amino-acid sequence, 108 residues long: uncharacterized protein (108 aa).

The first 20 residues, 1-20 (MNLKSIIFVLFIAFFAFSLA), serve as a signal peptide directing secretion. A glycan (N-linked (GlcNAc...) asparagine) is linked at Asn-39.

This sequence belongs to the Dictyostelium gerABC family.

The protein resides in the secreted. This is an uncharacterized protein from Dictyostelium discoideum (Social amoeba).